The sequence spans 287 residues: Ribosomal RNA small subunit methyltransferase A (287 aa).

S-adenosyl-L-methionine is bound by residues N28, L30, G55, E77, D103, and N123.

This sequence belongs to the class I-like SAM-binding methyltransferase superfamily. rRNA adenine N(6)-methyltransferase family. RsmA subfamily.

The protein resides in the cytoplasm. It catalyses the reaction adenosine(1518)/adenosine(1519) in 16S rRNA + 4 S-adenosyl-L-methionine = N(6)-dimethyladenosine(1518)/N(6)-dimethyladenosine(1519) in 16S rRNA + 4 S-adenosyl-L-homocysteine + 4 H(+). Functionally, specifically dimethylates two adjacent adenosines (A1518 and A1519) in the loop of a conserved hairpin near the 3'-end of 16S rRNA in the 30S particle. May play a critical role in biogenesis of 30S subunits. This is Ribosomal RNA small subunit methyltransferase A from Nitrobacter winogradskyi (strain ATCC 25391 / DSM 10237 / CIP 104748 / NCIMB 11846 / Nb-255).